The primary structure comprises 1415 residues: Bridge-like lipid transfer protein family member 3B (1415 aa).

Positions 3–94 (GLIKKQILKH…DKVIMEMSTC (92 aa)) constitute a Chorein N-terminal domain. 2 disordered regions span residues 267 to 300 (STEQ…STTP) and 882 to 904 (KSPL…SEGV). Polar residues predominate over residues 275 to 300 (ASETTQSPTPPVSSQQVKNPQTSTTP). Residues 1367–1404 (KAAGISKEQLVEENECLKQELAKTKMALAESHMERDRL) are a coiled coil.

It localises to the cytoplasm. Its subcellular location is the cytosol. It is found in the early endosome. Tube-forming lipid transport protein which mediates the transfer of lipids between membranes at organelle contact sites. Required for retrograde traffic of vesicle clusters in the early endocytic pathway to the Golgi complex. In Xenopus laevis (African clawed frog), this protein is Bridge-like lipid transfer protein family member 3B (bltp3b).